The sequence spans 109 residues: Mannose-specific lectin (109 aa).

The region spanning 25–109 (MQEDCNLVLY…ARWATGTNIH (85 aa)) is the Bulb-type lectin domain. Alpha-D-mannopyranose is bound by residues Q26, D28, N30, Y34, D37, K38, W41, A42, N44, Q57, D59, N61, Y65, I72, W73, N76, N83, Q89, D91, N93, Y97, and W102. An intrachain disulfide couples C29 to C52.

Homotetramer; antiparallel. As to expression, detected in bulbs (at protein level).

The protein localises to the secreted. With respect to regulation, strongly inhibited by alpha-1,6-linked mannotriose. Inhibited by various oligosaccharides of P.pastoris mannan including, Man(alpha-l,6)Man-alpha-O-Me, Man(alpha-l,2)Man, Man(alpha-l,3)Man-alpha-O-Me, Man(alpha-l,2)Man, alpha-1,2-linked mannotriose, and Man(alpha-1,6)Glc, in order of decreasing potency. Weakly inhibited by elsinotetraose. Not inhibited by maltose or nigerose. In terms of biological role, D-mannose-binding lectin which binds alpha-D-linked mannose. Displays a high affinity for alpha-(1-6)-mannose oligomers. Able to interact with both terminal and internal alpha-D-mannosyl residues. Displays antiviral activity and therefore may contribute to defense against infections. The polypeptide is Mannose-specific lectin (Narcissus pseudonarcissus (Daffodil)).